The primary structure comprises 68 residues: Large ribosomal subunit protein bL35 (68 aa).

It belongs to the bacterial ribosomal protein bL35 family.

The protein is Large ribosomal subunit protein bL35 of Orientia tsutsugamushi (strain Ikeda) (Rickettsia tsutsugamushi).